We begin with the raw amino-acid sequence, 156 residues long: Ribosomal RNA large subunit methyltransferase H (156 aa).

Residues leucine 72, glycine 104, and 123–128 (LSEMTL) each bind S-adenosyl-L-methionine.

It belongs to the RNA methyltransferase RlmH family. In terms of assembly, homodimer.

It localises to the cytoplasm. The enzyme catalyses pseudouridine(1915) in 23S rRNA + S-adenosyl-L-methionine = N(3)-methylpseudouridine(1915) in 23S rRNA + S-adenosyl-L-homocysteine + H(+). Its function is as follows. Specifically methylates the pseudouridine at position 1915 (m3Psi1915) in 23S rRNA. The sequence is that of Ribosomal RNA large subunit methyltransferase H from Syntrophotalea carbinolica (strain DSM 2380 / NBRC 103641 / GraBd1) (Pelobacter carbinolicus).